A 763-amino-acid chain; its full sequence is Phosphoglycerol transferase I (763 aa).

The next 4 helical transmembrane spans lie at methionine 1–alanine 21, tryptophan 26–phenylalanine 46, isoleucine 77–isoleucine 97, and phenylalanine 108–phenylalanine 128.

Belongs to the OpgB family.

The protein localises to the cell inner membrane. The catalysed reaction is a phosphatidylglycerol + a membrane-derived-oligosaccharide D-glucose = a 1,2-diacyl-sn-glycerol + a membrane-derived-oligosaccharide 6-(glycerophospho)-D-glucose.. It functions in the pathway glycan metabolism; osmoregulated periplasmic glucan (OPG) biosynthesis. Its function is as follows. Transfers a phosphoglycerol residue from phosphatidylglycerol to the membrane-bound nascent glucan backbones. This Escherichia coli O17:K52:H18 (strain UMN026 / ExPEC) protein is Phosphoglycerol transferase I.